The following is a 379-amino-acid chain: Class V chitinase CHIT5b (379 aa).

Positions Met1 to Thr26 are cleaved as a signal peptide. The GH18 domain maps to Arg34–Val379. N-linked (GlcNAc...) asparagine glycosylation is found at Asn68, Asn109, and Asn128. The active-site Proton donor is Glu147. N-linked (GlcNAc...) asparagine glycans are attached at residues Asn192, Asn227, and Asn241.

Belongs to the glycosyl hydrolase 18 family. Chitinase class V subfamily.

It catalyses the reaction Random endo-hydrolysis of N-acetyl-beta-D-glucosaminide (1-&gt;4)-beta-linkages in chitin and chitodextrins.. The protein operates within glycan degradation; chitin degradation. Possesses chitinase activity in vitro toward glycol chitin, carboxymethyl-chitin, colloidal chitin, and the chitin oligosaccharides (N-acetylglucosamine) (GlcNAc)6 and (GlcNAc)5. Hydrolyzes (GlcNAc)6 into (GlcNAc)4 and (GlcNAc)2, or two (GlcNAc)3 molecules. Has the capacity to reduce hyphal growth of the fungus Trichoderma viride in an agar-plate bioassay. This Medicago truncatula (Barrel medic) protein is Class V chitinase CHIT5b.